A 327-amino-acid polypeptide reads, in one-letter code: Ribosomal RNA small subunit methyltransferase H (327 aa).

Residues 42–44 (GGH), aspartate 61, leucine 95, aspartate 109, and glutamine 116 contribute to the S-adenosyl-L-methionine site.

The protein belongs to the methyltransferase superfamily. RsmH family.

The protein resides in the cytoplasm. The enzyme catalyses cytidine(1402) in 16S rRNA + S-adenosyl-L-methionine = N(4)-methylcytidine(1402) in 16S rRNA + S-adenosyl-L-homocysteine + H(+). Specifically methylates the N4 position of cytidine in position 1402 (C1402) of 16S rRNA. The protein is Ribosomal RNA small subunit methyltransferase H of Desulfovibrio desulfuricans (strain ATCC 27774 / DSM 6949 / MB).